Here is a 191-residue protein sequence, read N- to C-terminus: Uridylate kinase (191 aa).

ATP is bound at residue 12-17 (GAGKGT). The NMP stretch occupies residues 33 to 63 (SAGDCLREEQNRPGSKYGNLIKEYIKDGKIV). Residues arginine 39, 61 to 63 (KIV), 91 to 94 (GFPR), and glutamine 98 each bind a ribonucleoside 5'-phosphate. Positions 128–138 (HRGKTSGRSDD) are LID. Residue arginine 129 coordinates ATP. Arginine 135 and arginine 146 together coordinate a ribonucleoside 5'-phosphate. Residue glutamine 174 participates in ATP binding.

Belongs to the adenylate kinase family. UMP-CMP kinase subfamily. In terms of assembly, monomer. Requires Mg(2+) as cofactor.

The protein localises to the cytoplasm. Its subcellular location is the nucleus. The enzyme catalyses UMP + ATP = UDP + ADP. Its function is as follows. Catalyzes the phosphorylation of pyrimidine nucleoside monophosphates at the expense of ATP. Plays an important role in de novo pyrimidine nucleotide biosynthesis. Has preference for UMP and dUMP as phosphate acceptors, but can also use CMP, dCMP and AMP. The polypeptide is Uridylate kinase (Schizosaccharomyces pombe (strain 972 / ATCC 24843) (Fission yeast)).